The sequence spans 1042 residues: FHIP family protein AAEL005291 (1042 aa).

Positions 1–14 are enriched in polar residues; that stretch reads MSWLRSSPLRQSFS. 4 disordered regions span residues 1 to 31, 494 to 514, 821 to 866, and 905 to 977; these read MSWL…GGNS, NNTS…PQGG, PHSG…KRND, and SNSS…GSPH. Positions 839-859 are enriched in polar residues; sequence VSMTSNLSQTTPMQLTPSSSY. 2 stretches are compositionally biased toward low complexity: residues 905–940 and 956–976; these read SNSS…FMGS and PSIG…TGSP.

It belongs to the FHIP family.

The chain is FHIP family protein AAEL005291 from Aedes aegypti (Yellowfever mosquito).